The chain runs to 514 residues: Protein Tube (514 aa).

Disordered stretches follow at residues 226–250 (VPQQ…RSSR), 255–274 (TASN…SNTA), 324–343 (LDAG…STST), 366–385 (ASDA…VPDM), and 413–514 (NGAK…ELQQ). Residues 259–274 (VAPTTASNAPSASNTA) show a composition bias toward low complexity. Residues 422 to 433 (ADNNSSGTNSLS) show a composition bias toward polar residues. Residues 434-460 (NDDDEQKEDDDDDDDDDVVDVDDEEAD) are compositionally biased toward acidic residues. The segment covering 477–514 (TTVTCTSGENSFEFTNDSSSASNDDYTNNIPNLSELQQ) has biased composition (polar residues).

Maternal and zygotic gene product.

It is found in the cytoplasm. In terms of biological role, required for the determination of embryonic dorsoventral polarity. Is involved in transduction of information regulating nuclear import of dorsal protein. The chain is Protein Tube (tub) from Drosophila virilis (Fruit fly).